Consider the following 205-residue polypeptide: UPF0688 protein C1orf174 homolog (205 aa).

Basic residues predominate over residues methionine 1 to asparagine 18. Disordered stretches follow at residues methionine 1 to valine 128 and alanine 184 to isoleucine 205. Residues asparagine 46 to methionine 63 show a composition bias toward basic and acidic residues. Over residues isoleucine 71–threonine 108 the composition is skewed to polar residues. Acidic residues predominate over residues glutamate 187–alanine 196.

Belongs to the UPF0688 family.

The protein resides in the nucleus. The chain is UPF0688 protein C1orf174 homolog from Xenopus laevis (African clawed frog).